The chain runs to 139 residues: uncharacterized protein (139 aa).

This is an uncharacterized protein from Saccharomyces cerevisiae (strain ATCC 204508 / S288c) (Baker's yeast).